Here is a 512-residue protein sequence, read N- to C-terminus: NADH-quinone oxidoreductase subunit N 2 (512 aa).

The next 14 helical transmembrane spans lie at 23–43 (AFVP…IDLF), 50–70 (TIIP…VYLQ), 88–108 (FAIF…LISI), 120–140 (SLGE…LMAS), 144–164 (LLMM…LVGY), 179–199 (VIYG…IYGL), 220–240 (ITLM…AGVV), 254–274 (PTPI…AMLI), 295–315 (WVTL…VVAL), 323–343 (LLAY…IVAD), 351–371 (LFYL…IILI), 394–414 (AASL…VGFI), 429–449 (VFVW…YFYF), and 477–497 (LVAF…PLSV).

Belongs to the complex I subunit 2 family. As to quaternary structure, NDH-1 is composed of 14 different subunits. Subunits NuoA, H, J, K, L, M, N constitute the membrane sector of the complex.

The protein resides in the cell inner membrane. It catalyses the reaction a quinone + NADH + 5 H(+)(in) = a quinol + NAD(+) + 4 H(+)(out). NDH-1 shuttles electrons from NADH, via FMN and iron-sulfur (Fe-S) centers, to quinones in the respiratory chain. The immediate electron acceptor for the enzyme in this species is believed to be a menaquinone. Couples the redox reaction to proton translocation (for every two electrons transferred, four hydrogen ions are translocated across the cytoplasmic membrane), and thus conserves the redox energy in a proton gradient. The chain is NADH-quinone oxidoreductase subunit N 2 from Chloroherpeton thalassium (strain ATCC 35110 / GB-78).